A 317-amino-acid chain; its full sequence is MSEKTAVLLLQMGGPDSLDAVEPFLVNLFSDRDIIRIGPAFLQPFIARLIAKKRATPVERKYEEIGGKSPIRELTEAQAKALEEVLGDGYCCFTAMRYWKPTTVEALAAIRREGITRIIALSLYPHYSRATTGSSVNELKRVLAQSGATFDVTYVDRFFDHPRYIEALAEKIKEGLDDFHPLAEVQILFSAHSLPQSFIDEGDPYLSHIEETVRLVMERFEGVTYHLAFQSRAGPVKWLEPSTEEILEYLAAHQVKNLLMVPLSFVSDHIETLHEIDIEYAMLAHRLGYAKFRRSPSLNTSPLFIDCLADLVRKAGM.

His-192 and Glu-271 together coordinate Fe cation.

The protein belongs to the ferrochelatase family.

The protein resides in the cytoplasm. It carries out the reaction heme b + 2 H(+) = protoporphyrin IX + Fe(2+). The protein operates within porphyrin-containing compound metabolism; protoheme biosynthesis; protoheme from protoporphyrin-IX: step 1/1. Catalyzes the ferrous insertion into protoporphyrin IX. In Geobacter metallireducens (strain ATCC 53774 / DSM 7210 / GS-15), this protein is Ferrochelatase.